The sequence spans 446 residues: uncharacterized protein (446 aa).

Disordered stretches follow at residues 63–95 and 155–232; these read KNKP…SDLR and AESS…HPVK. The span at 156–169 shows a compositional bias: polar residues; the sequence is ESSVPTPKLTNESN. Composition is skewed to basic and acidic residues over residues 182–199 and 213–227; these read DQHE…DHSA and ITKE…EARK.

This is an uncharacterized protein from Mus musculus (Mouse).